The primary structure comprises 147 residues: Myoglobin (147 aa).

The Globin domain maps to 2 to 141 (ADFDMVLKCW…IIADMEADYK (140 aa)). Residue His-60 coordinates nitrite. His-60 serves as a coordination point for O2. His-89 contributes to the heme b binding site.

It belongs to the globin family. In terms of assembly, monomeric.

It localises to the cytoplasm. The protein resides in the sarcoplasm. The enzyme catalyses Fe(III)-heme b-[protein] + nitric oxide + H2O = Fe(II)-heme b-[protein] + nitrite + 2 H(+). It carries out the reaction H2O2 + AH2 = A + 2 H2O. In terms of biological role, monomeric heme protein which primary function is to store oxygen and facilitate its diffusion within muscle tissues. Reversibly binds oxygen through a pentacoordinated heme iron and enables its timely and efficient release as needed during periods of heightened demand. Depending on the oxidative conditions of tissues and cells, and in addition to its ability to bind oxygen, it also has a nitrite reductase activity whereby it regulates the production of bioactive nitric oxide. Under stress conditions, like hypoxia and anoxia, it also protects cells against reactive oxygen species thanks to its pseudoperoxidase activity. The polypeptide is Myoglobin (mb) (Notothenia neglecta (Yellowbelly rockcod)).